A 619-amino-acid chain; its full sequence is DNA polymerase II small subunit (619 aa).

The segment at 78–122 is disordered; that stretch reads EEAEKTVESQETRASELEEGGVSQVSSGELQELKEESPEISTTEE. A compositionally biased stretch (basic and acidic residues) spans 79 to 93; it reads EAEKTVESQETRASE.

The protein belongs to the DNA polymerase delta/II small subunit family. In terms of assembly, heterodimer of a large subunit and a small subunit.

It catalyses the reaction DNA(n) + a 2'-deoxyribonucleoside 5'-triphosphate = DNA(n+1) + diphosphate. The enzyme catalyses Exonucleolytic cleavage in the 3'- to 5'-direction to yield nucleoside 5'-phosphates.. Possesses two activities: a DNA synthesis (polymerase) and an exonucleolytic activity that degrades single-stranded DNA in the 3' to 5' direction. Has a template-primer preference which is characteristic of a replicative DNA polymerase. The sequence is that of DNA polymerase II small subunit (polB) from Pyrococcus abyssi (strain GE5 / Orsay).